A 579-amino-acid chain; its full sequence is Potassium-transporting ATPase potassium-binding subunit (579 aa).

Helical transmembrane passes span 1-21, 64-84, 135-155, 178-198, 265-285, 293-313, 398-418, 435-455, 503-523, and 549-569; these read MISN…ACVV, HYAL…YGLQ, GLTV…IGLI, IYIL…QGVV, FLEL…FGLM, WAIL…AVSA, GLYG…LMVG, MAAL…AIAV, WLGI…LAIA, and LLIG…LALG.

The protein belongs to the KdpA family. The system is composed of three essential subunits: KdpA, KdpB and KdpC.

The protein localises to the cell membrane. Functionally, part of the high-affinity ATP-driven potassium transport (or Kdp) system, which catalyzes the hydrolysis of ATP coupled with the electrogenic transport of potassium into the cytoplasm. This subunit binds the extracellular potassium ions and delivers the ions to the membrane domain of KdpB through an intramembrane tunnel. This Herpetosiphon aurantiacus (strain ATCC 23779 / DSM 785 / 114-95) protein is Potassium-transporting ATPase potassium-binding subunit.